Consider the following 350-residue polypeptide: FAD:protein FMN transferase (350 aa).

Residues 1 to 19 (MDMTFFRAALLGACVLLSG) form the signal peptide. Residue Cys-20 is the site of N-palmitoyl cysteine attachment. A lipid anchor (S-diacylglycerol cysteine) is attached at Cys-20. Residues Met-41, Trp-78, 119–121 (AMD), and Asp-181 contribute to the FAD site. Residue Thr-184 coordinates Mg(2+). Glu-187 and Ile-272 together coordinate FAD. Mg(2+) is bound by residues Asp-298, Asp-301, and Thr-302.

The protein belongs to the ApbE family. Mg(2+) serves as cofactor.

The protein localises to the cell inner membrane. The catalysed reaction is L-threonyl-[protein] + FAD = FMN-L-threonyl-[protein] + AMP + H(+). Flavin transferase that catalyzes the transfer of the FMN moiety of FAD and its covalent binding to the hydroxyl group of a threonine residue in a target flavoprotein such as NqrB and NqrC, two subunits of the NQR complex. This Klebsiella pneumoniae (strain 342) protein is FAD:protein FMN transferase.